The sequence spans 100 residues: Urease subunit gamma (100 aa).

The protein belongs to the urease gamma subunit family. In terms of assembly, heterotrimer of UreA (gamma), UreB (beta) and UreC (alpha) subunits. Three heterotrimers associate to form the active enzyme.

Its subcellular location is the cytoplasm. The catalysed reaction is urea + 2 H2O + H(+) = hydrogencarbonate + 2 NH4(+). It functions in the pathway nitrogen metabolism; urea degradation; CO(2) and NH(3) from urea (urease route): step 1/1. The chain is Urease subunit gamma from Polaromonas naphthalenivorans (strain CJ2).